The primary structure comprises 375 residues: MAATAQYLPRNNSLPSNPLMHPDSDRMHQGTTYREVQKMMHQEYLQGLATNAGHPMSLTHHQWLPNPTSDWGSGSHLGAQAEHGKSGVQSSREDLSSSFHHHRSHLVHQQTPSSHAWAQSGGHHLPSMSPGSNSHQPLIYSQSSYTNLNGMLGPQASSLHHSMRDPLHDDPGVHDTHVESPPQHLGHHQDHSDEDAPSSDDLEQFAKQFKQRRIKLGFTQADVGLALGTLYGNVFSQTTICRFEALQLSFKNMCKLKPLLNKWLEETDSTTGSPTNLDKIAAQGRKRKKRTSIEVGVKGALENHFLKCPKPSAHEITSLADSLQLEKEVVRVWFCNRRQKEKRMTPAGVPHPPMEDVYSQAETPPLHHTLQTSVQ.

Disordered regions lie at residues 1 to 29 (MAATAQYLPRNNSLPSNPLMHPDSDRMHQ), 56 to 139 (MSLT…QPLI), and 151 to 200 (MLGP…PSSD). 3 stretches are compositionally biased toward polar residues: residues 107-117 (VHQQTPSSHAW), 129-139 (SPGSNSHQPLI), and 151-160 (MLGPQASSLH). Basic and acidic residues predominate over residues 162 to 178 (SMRDPLHDDPGVHDTHV). One can recognise a POU-specific domain in the interval 194-268 (EDAPSSDDLE…LLNKWLEETD (75 aa)). Positions 286 to 345 (KRKKRTSIEVGVKGALENHFLKCPKPSAHEITSLADSLQLEKEVVRVWFCNRRQKEKRMT) form a DNA-binding region, homeobox.

The protein belongs to the POU transcription factor family. Class-3 subfamily.

Its subcellular location is the nucleus. Acts as a transcription factor. May play a role in neuronal differentiation. The polypeptide is POU domain, class 3, transcription factor 1-B (pou3f1-b) (Xenopus laevis (African clawed frog)).